Consider the following 552-residue polypeptide: DnaJ homolog subfamily C member 1 (552 aa).

Residues 1–43 form the signal peptide; it reads MWVPGFGSARLPQRRRSGLESSSVRPLWLLLLFLLAAVRPVRA. Topologically, residues 44-149 are lumenal; that stretch reads WESGDLELFD…RRVRKMSNAE (106 aa). The J domain occupies 56 to 129; sequence EEVQLNFYEF…RYDDVLINGL (74 aa). The chain crosses the membrane as a helical span at residues 150–170; that stretch reads LALLLFIILTVGHYAVVWSIY. Topologically, residues 171 to 552 are cytoplasmic; the sequence is LEKQLDELLG…LVQKKKQAKS (382 aa). One can recognise an SANT 1 domain in the interval 323 to 377; that stretch reads RQAPEWTEEDLSQLTRSMVKFPGGTPGRWDKIAHELGRSVTDVTTKAKELKDSVT. Residues 370 to 495 form a disordered region; it reads KELKDSVTSS…ERTRAAEEAW (126 aa). A Phosphoserine modification is found at serine 379. Over residues 419 to 431 the composition is skewed to acidic residues; it reads MEDEEHEAAEGEQ. Residues 453-470 show a composition bias toward basic and acidic residues; sequence TRVEPEEKLRGKRQKDFD. A phosphoserine mark is found at serine 477 and serine 478. Basic and acidic residues predominate over residues 480–492; sequence EEKQRKERTRAAE. The SANT 2 domain maps to 490-545; the sequence is AAEEAWTQSQQKLLELALQQYPKGASDRWDKIAKCVPSKSKEDCIARYKLLVELVQ.

As to quaternary structure, interacts (via J domain) with HSPA5. Interacts (via cytosolic domain) with ribosomes. Interacts (via SANT 2 domain) with SERPINA3; the interaction delays the formation of the covalent inhibitory complex SERPINA3-chymotrypsin, but does not alter the catalytic activity of SERPINA3. Interacts (via SANT 2 domain) with ITIH4 (via C-terminus); the interaction protects ITIH4 against in vitro cleavage by kallikrein. In terms of tissue distribution, widely expressed.

Its subcellular location is the endoplasmic reticulum membrane. It is found in the nucleus membrane. It localises to the microsome membrane. Functionally, may modulate protein synthesis. The sequence is that of DnaJ homolog subfamily C member 1 (Dnajc1) from Mus musculus (Mouse).